We begin with the raw amino-acid sequence, 207 residues long: Ras-related protein Rab-8B (207 aa).

The GTP site is built by S17, G18, V19, G20, K21, T22, C23, T35, S39, and T40. Mg(2+) is bound at residue T22. 2 short sequence motifs (switch) span residues 31-45 and 63-80; these read DAFN…GIDF and DTAG…YYRG. 2 residues coordinate Mg(2+): T40 and D63. Residue G66 participates in GTP binding. Residue T72 is modified to Phosphothreonine. The GTP site is built by N121, K122, D124, A152, and K153. S180 carries the phosphoserine modification. C204 carries the post-translational modification Cysteine methyl ester. C204 is lipidated: S-geranylgeranyl cysteine. Residues 205 to 207 constitute a propeptide, removed in mature form; the sequence is LLL.

This sequence belongs to the small GTPase superfamily. Rab family. As to quaternary structure, associated with actin, delta-catenin and alpha and beta tubulins. Interacts with OTOF. Interacts with PEX5R. Interacts with RAB3IP. Interacts with VIM. Interacts with CDH1. Interacts with MICALL2. Interacts with GDI1, GDI2, CHML and CHM; phosphorylation at Thr-72 disrupts these interactions. Interacts with MICAL1. Mg(2+) serves as cofactor. Phosphorylation of Thr-72 in the switch II region by LRRK2 prevents the association of RAB regulatory proteins, including CHM, CHML and RAB GDP dissociation inhibitors GDI1 and GDI2.

Its subcellular location is the cell membrane. The protein localises to the cytoplasmic vesicle. The protein resides in the phagosome membrane. It localises to the endosome membrane. It catalyses the reaction GTP + H2O = GDP + phosphate + H(+). With respect to regulation, regulated by guanine nucleotide exchange factors (GEFs) including RAB3IP/RABIN8 which promotes the exchange of bound GDP for free GTP. Regulated by GTPase activating proteins (GAPs) which increase the GTP hydrolysis activity. Inhibited by GDP dissociation inhibitors (GDIs). In terms of biological role, the small GTPases Rab are key regulators of intracellular membrane trafficking, from the formation of transport vesicles to their fusion with membranes. Rabs cycle between an inactive GDP-bound form and an active GTP-bound form that is able to recruit to membranes different sets of downstream effectors directly responsible for vesicle formation, movement, tethering and fusion. RAB8B may be involved in polarized vesicular trafficking and neurotransmitter release. May participate in cell junction dynamics in Sertoli cells. May also participate in the export of a subset of neosynthesized proteins through a Rab8-Rab10-Rab11-dependent endososomal export route. This chain is Ras-related protein Rab-8B (RAB8B), found in Pongo abelii (Sumatran orangutan).